We begin with the raw amino-acid sequence, 238 residues long: Ribonuclease PH (238 aa).

Residues Arg-86 and 124-126 (GTR) contribute to the phosphate site.

This sequence belongs to the RNase PH family. In terms of assembly, homohexameric ring arranged as a trimer of dimers.

The catalysed reaction is tRNA(n+1) + phosphate = tRNA(n) + a ribonucleoside 5'-diphosphate. Functionally, phosphorolytic 3'-5' exoribonuclease that plays an important role in tRNA 3'-end maturation. Removes nucleotide residues following the 3'-CCA terminus of tRNAs; can also add nucleotides to the ends of RNA molecules by using nucleoside diphosphates as substrates, but this may not be physiologically important. Probably plays a role in initiation of 16S rRNA degradation (leading to ribosome degradation) during starvation. The protein is Ribonuclease PH of Yersinia enterocolitica serotype O:8 / biotype 1B (strain NCTC 13174 / 8081).